A 166-amino-acid chain; its full sequence is Crossover junction endodeoxyribonuclease RuvC (166 aa).

Catalysis depends on residues aspartate 7, glutamate 68, and aspartate 141. 3 residues coordinate Mg(2+): aspartate 7, glutamate 68, and aspartate 141.

It belongs to the RuvC family. As to quaternary structure, homodimer which binds Holliday junction (HJ) DNA. The HJ becomes 2-fold symmetrical on binding to RuvC with unstacked arms; it has a different conformation from HJ DNA in complex with RuvA. In the full resolvosome a probable DNA-RuvA(4)-RuvB(12)-RuvC(2) complex forms which resolves the HJ. Mg(2+) is required as a cofactor.

The protein localises to the cytoplasm. It catalyses the reaction Endonucleolytic cleavage at a junction such as a reciprocal single-stranded crossover between two homologous DNA duplexes (Holliday junction).. In terms of biological role, the RuvA-RuvB-RuvC complex processes Holliday junction (HJ) DNA during genetic recombination and DNA repair. Endonuclease that resolves HJ intermediates. Cleaves cruciform DNA by making single-stranded nicks across the HJ at symmetrical positions within the homologous arms, yielding a 5'-phosphate and a 3'-hydroxyl group; requires a central core of homology in the junction. The consensus cleavage sequence is 5'-(A/T)TT(C/G)-3'. Cleavage occurs on the 3'-side of the TT dinucleotide at the point of strand exchange. HJ branch migration catalyzed by RuvA-RuvB allows RuvC to scan DNA until it finds its consensus sequence, where it cleaves and resolves the cruciform DNA. The sequence is that of Crossover junction endodeoxyribonuclease RuvC from Caldicellulosiruptor saccharolyticus (strain ATCC 43494 / DSM 8903 / Tp8T 6331).